The primary structure comprises 130 residues: Guanyl-specific ribonuclease T1 (130 aa).

An N-terminal signal peptide occupies residues 1–26; the sequence is MMYSKLLTLTTLLLPTALALPSLVER. 2 cysteine pairs are disulfide-bonded: Cys28-Cys36 and Cys32-Cys129. Residue His66 is part of the active site. Glu84 functions as the Proton acceptor in the catalytic mechanism. Residue His118 is the Proton donor of the active site.

It belongs to the ribonuclease N1/T1 family. Monomer.

The catalysed reaction is [RNA] containing guanosine + H2O = an [RNA fragment]-3'-guanosine-3'-phosphate + a 5'-hydroxy-ribonucleotide-3'-[RNA fragment].. The chain is Guanyl-specific ribonuclease T1 (rntA) from Aspergillus oryzae (strain ATCC 42149 / RIB 40) (Yellow koji mold).